The chain runs to 822 residues: Phenylalanine--tRNA ligase beta subunit (822 aa).

Positions 39-150 (ADRLVGFRTA…ETAPIGESYA (112 aa)) constitute a tRNA-binding domain. Residues 399–502 (DWKRTARLRF…RLYGLDNVPA (104 aa)) enclose the B5 domain. The Mg(2+) site is built by Asp486, Glu489, and Glu490. Residues 728–821 (SPLQPVRRDF…VLKATGAVLR (94 aa)) enclose the FDX-ACB domain.

This sequence belongs to the phenylalanyl-tRNA synthetase beta subunit family. Type 1 subfamily. In terms of assembly, tetramer of two alpha and two beta subunits. Requires Mg(2+) as cofactor.

Its subcellular location is the cytoplasm. The catalysed reaction is tRNA(Phe) + L-phenylalanine + ATP = L-phenylalanyl-tRNA(Phe) + AMP + diphosphate + H(+). The polypeptide is Phenylalanine--tRNA ligase beta subunit (Gluconobacter oxydans (strain 621H) (Gluconobacter suboxydans)).